A 243-amino-acid chain; its full sequence is L-fucose operon activator (243 aa).

An HTH deoR-type domain is found at 1–57; it reads MKAARQQAIVDLLLNHTSLTTEALSEQLKVSKETIRRDLNELQTQGKILRNHGRAKY. The H-T-H motif DNA-binding region spans 19 to 38; that stretch reads LTTEALSEQLKVSKETIRRD.

Transcriptional activator of the fuc operon. The protein is L-fucose operon activator (fucR) of Escherichia coli (strain K12).